Consider the following 293-residue polypeptide: Elongation factor Ts (293 aa).

The involved in Mg(2+) ion dislocation from EF-Tu stretch occupies residues 80–83; the sequence is TDFV.

This sequence belongs to the EF-Ts family.

It is found in the cytoplasm. Functionally, associates with the EF-Tu.GDP complex and induces the exchange of GDP to GTP. It remains bound to the aminoacyl-tRNA.EF-Tu.GTP complex up to the GTP hydrolysis stage on the ribosome. The chain is Elongation factor Ts from Aeromonas salmonicida (strain A449).